Consider the following 221-residue polypeptide: Probable septum site-determining protein MinC (221 aa).

This sequence belongs to the MinC family. Interacts with MinD and FtsZ.

Its function is as follows. Cell division inhibitor that blocks the formation of polar Z ring septums. Rapidly oscillates between the poles of the cell to destabilize FtsZ filaments that have formed before they mature into polar Z rings. Prevents FtsZ polymerization. This chain is Probable septum site-determining protein MinC, found in Shewanella oneidensis (strain ATCC 700550 / JCM 31522 / CIP 106686 / LMG 19005 / NCIMB 14063 / MR-1).